A 492-amino-acid polypeptide reads, in one-letter code: MKKTRDNPCDKIELGNKTSQKGVSLVKKHIFEDIILQNALNFTEEVVEIFGDLLNKGMNITELVARIKELTDKLGRGAIEAIIEELDRIIKEDKRRKEKWVVERKDKKRLTTVLGDIEYERTYYKSKEDGRYTYLVDDALEIGRHDRIEKGVKIKLVENAIEESYERSSKKACPEELSKQTVLNAIREIGEVEVKREIKEKKEVRVLYIEADEDHVPLQDGRDETPRLVYIHEGREEKNGRNVLKNVYYKAYVGEKPEDIWIDVANYIEDNYKEEKIEKIYIAGDGAPWIKEGLKWILKSRFVLDRYHLNKYVLKATSKEPKYRDKIWRAINEGDKERVKKVFDELIKAAEEEREKEKIKEAKKYILNNWEGIKIYNEDEDVIGCSAEGHISHVFSARLSRNPLGWSREGLKLMAKLRVFSKNGGDLREVEWGKKKNINAGSYKLTKKQIKEAVRRVKTSTNEKINNITVLNIGKVTPIYRVLRALKYAQVI.

This sequence belongs to the UPF0236 family.

The polypeptide is UPF0236 protein TTE1650/TTE2708 (Caldanaerobacter subterraneus subsp. tengcongensis (strain DSM 15242 / JCM 11007 / NBRC 100824 / MB4) (Thermoanaerobacter tengcongensis)).